A 219-amino-acid polypeptide reads, in one-letter code: RPA-interacting protein (219 aa).

S18 is subject to Phosphoserine. The RIP-type zinc finger occupies 137-212 (CPVCIKYNLR…PSLLMNCLTC (76 aa)). The mediates nuclear export stretch occupies residues 164–180 (STDLTEQKLRACLEENV).

Interacts with the RPA1 subunit of RPA complex. In terms of processing, sumoylated; required for localization in the nuclear PML body and transport of RPA complex in PML body. Upon UV irradiation and during S phase, it is desumoylated, releasing RPA complex that is translocated to sites of DNA damage. Sumoylation takes place at different Lys residues.

The protein localises to the nucleus. Its function is as follows. Mediates the import of RPA complex into the nucleus, possibly via some interaction with importin beta. Sumoylation mediates the localization of RPA complex into the PML body of the nucleus, thereby participating in RPA function in DNA metabolism. This Mus musculus (Mouse) protein is RPA-interacting protein (Rpain).